A 354-amino-acid chain; its full sequence is Photosystem II protein D1 3 (354 aa).

Transmembrane regions (helical) follow at residues 29 to 46, 118 to 133, and 142 to 156; these read YIGW…TATT, HFLI…EWEL, and WIAV…AATA. Position 118 (His-118) interacts with chlorophyll a. Pheophytin a is bound at residue Tyr-126. [CaMn4O5] cluster contacts are provided by Asp-170 and Glu-189. Residues 197–218 traverse the membrane as a helical segment; sequence FHQLGVAGVFGGALFSAMHGSL. A chlorophyll a-binding site is contributed by His-198. Residues His-215 and 264-265 each bind a quinone; that span reads SF. His-215 is a Fe cation binding site. His-272 provides a ligand contact to Fe cation. The helical transmembrane segment at 274-288 threads the bilayer; that stretch reads FLAAWPVIGIWFTAL. Residues His-332, Glu-333, Asp-342, and Ala-344 each coordinate [CaMn4O5] cluster. Positions 345 to 354 are excised as a propeptide; that stretch reads AVEVAPAVRG.

Belongs to the reaction center PufL/M/PsbA/D family. As to quaternary structure, PSII is composed of 1 copy each of membrane proteins PsbA, PsbB, PsbC, PsbD, PsbE, PsbF, PsbH, PsbI, PsbJ, PsbK, PsbL, PsbM, PsbT, PsbX, PsbY, PsbZ, Psb30/Ycf12, peripheral proteins PsbO, CyanoQ (PsbQ), PsbU, PsbV and a large number of cofactors. It forms dimeric complexes. The D1/D2 heterodimer binds P680, chlorophylls that are the primary electron donor of PSII, and subsequent electron acceptors. It shares a non-heme iron and each subunit binds pheophytin, quinone, additional chlorophylls, carotenoids and lipids. D1 provides most of the ligands for the Mn4-Ca-O5 cluster of the oxygen-evolving complex (OEC). There is also a Cl(-1) ion associated with D1 and D2, which is required for oxygen evolution. The PSII complex binds additional chlorophylls, carotenoids and specific lipids. serves as cofactor. Post-translationally, tyr-161 forms a radical intermediate that is referred to as redox-active TyrZ, YZ or Y-Z. C-terminally processed by CtpA; processing is essential to allow assembly of the oxygen-evolving complex and thus photosynthetic growth.

It localises to the cellular thylakoid membrane. It catalyses the reaction 2 a plastoquinone + 4 hnu + 2 H2O = 2 a plastoquinol + O2. Functionally, photosystem II (PSII) is a light-driven water:plastoquinone oxidoreductase that uses light energy to abstract electrons from H(2)O, generating O(2) and a proton gradient subsequently used for ATP formation. It consists of a core antenna complex that captures photons, and an electron transfer chain that converts photonic excitation into a charge separation. The D1/D2 (PsbA/PsbD) reaction center heterodimer binds P680, the primary electron donor of PSII as well as several subsequent electron acceptors. The polypeptide is Photosystem II protein D1 3 (Synechococcus sp. (strain JA-3-3Ab) (Cyanobacteria bacterium Yellowstone A-Prime)).